A 106-amino-acid chain; its full sequence is ATP-dependent Clp protease adapter protein ClpS (106 aa).

This sequence belongs to the ClpS family. Binds to the N-terminal domain of the chaperone ClpA.

Involved in the modulation of the specificity of the ClpAP-mediated ATP-dependent protein degradation. The chain is ATP-dependent Clp protease adapter protein ClpS from Aliivibrio fischeri (strain ATCC 700601 / ES114) (Vibrio fischeri).